Reading from the N-terminus, the 101-residue chain is Apolipoprotein C-II (101 aa).

A signal peptide spans 1 to 22; sequence MGTRFLLALCLVLLVLGFEVQG. A lipid binding region spans residues 66–74; the sequence is AVDEKLRDL. Residues 78–101 are lipoprotein lipase cofactor; the sequence is STAAMSTYTGIFTDQVLSVLKGEE.

It belongs to the apolipoprotein C2 family. In terms of processing, proapolipoprotein C-II is synthesized as a sialic acid containing glycoprotein which is subsequently desialylated prior to its proteolytic processing. Proapolipoprotein C-II, the major form found in plasma undergoes proteolytic cleavage of its N-terminal hexapeptide to generate apolipoprotein C-II, which occurs as the minor form in plasma.

Its subcellular location is the secreted. Its function is as follows. Component of chylomicrons, very low-density lipoproteins (VLDL), low-density lipoproteins (LDL), and high-density lipoproteins (HDL) in plasma. Plays an important role in lipoprotein metabolism as an activator of lipoprotein lipase. Both proapolipoprotein C-II and apolipoprotein C-II can activate lipoprotein lipase. The protein is Apolipoprotein C-II (APOC2) of Colobus guereza (Mantled guereza).